The primary structure comprises 93 residues: Putative sodium channel toxin Ts41 (93 aa).

Residues M1–S23 form the signal peptide. 4 cysteine pairs are disulfide-bonded: C22-C87, C39-C62, C48-C67, and C52-C69. The LCN-type CS-alpha/beta domain occupies E26–K88.

It belongs to the long (4 C-C) scorpion toxin superfamily. In terms of tissue distribution, expressed by the venom gland.

It is found in the secreted. Functionally, the edited BmKBTx-like may modulate voltage-gated sodium channels (Nav). The non-edited form is able to form a heterodimer. In orthologs, a heterodimer with LVP beta-chain induces lipolysis in rat adipocytes, which is mediated through the beta-2 adrenergic receptor pathway (ADRB2). Since no LVP beta-chains have been identified in the venom of this scorpion, it is possible that this protein is not involved in a lipolysis process. This chain is Putative sodium channel toxin Ts41, found in Tityus serrulatus (Brazilian scorpion).